Reading from the N-terminus, the 780-residue chain is Zinc finger protein GLIS3 (780 aa).

2 stretches are compositionally biased toward polar residues: residues proline 80–threonine 92 and valine 106–leucine 115. 2 disordered regions span residues proline 80 to alanine 148 and proline 290 to histidine 315. The span at serine 135 to alanine 148 shows a compositional bias: basic residues. Residues leucine 293–histidine 308 are compositionally biased toward pro residues. A C2H2-type 1 zinc finger spans residues histidine 345–histidine 370. The segment at phenylalanine 379 to histidine 406 adopts a C2H2-type 2; atypical zinc-finger fold. 3 C2H2-type zinc fingers span residues asparagine 412–histidine 436, tyrosine 442–histidine 466, and tyrosine 472–histidine 496. 2 disordered regions span residues aspartate 485–glutamate 512 and leucine 527–glycine 670. A Bipartite nuclear localization signal motif is present at residues arginine 490–lysine 506. A compositionally biased stretch (basic and acidic residues) spans serine 497 to glutamate 512. Low complexity predominate over residues histidine 567–alanine 577. The span at valine 593–proline 605 shows a compositional bias: polar residues.

It belongs to the GLI C2H2-type zinc-finger protein family. As to expression, in the embryo, expressed at high levels in the kidney and testis. In the adult, expressed at high levels in the kidney and uterus and at lower levels in the brain, lung, skeletal muscle and pancreas.

Its subcellular location is the nucleus. In terms of biological role, acts both as a repressor and activator of transcription. Binds to the consensus sequence 5'-GACCACCCAC-3'. This chain is Zinc finger protein GLIS3, found in Mus musculus (Mouse).